The following is a 285-amino-acid chain: DegV domain-containing protein CA_C3284 (285 aa).

The DegV domain occupies 3-280; that stretch reads VKILTDSTSC…PGAIGIAYYT (278 aa). Positions 59 and 91 each coordinate hexadecanoate.

Functionally, may bind long-chain fatty acids, such as palmitate, and may play a role in lipid transport or fatty acid metabolism. The sequence is that of DegV domain-containing protein CA_C3284 from Clostridium acetobutylicum (strain ATCC 824 / DSM 792 / JCM 1419 / IAM 19013 / LMG 5710 / NBRC 13948 / NRRL B-527 / VKM B-1787 / 2291 / W).